We begin with the raw amino-acid sequence, 147 residues long: SsrA-binding protein (147 aa).

The protein belongs to the SmpB family.

It is found in the cytoplasm. Required for rescue of stalled ribosomes mediated by trans-translation. Binds to transfer-messenger RNA (tmRNA), required for stable association of tmRNA with ribosomes. tmRNA and SmpB together mimic tRNA shape, replacing the anticodon stem-loop with SmpB. tmRNA is encoded by the ssrA gene; the 2 termini fold to resemble tRNA(Ala) and it encodes a 'tag peptide', a short internal open reading frame. During trans-translation Ala-aminoacylated tmRNA acts like a tRNA, entering the A-site of stalled ribosomes, displacing the stalled mRNA. The ribosome then switches to translate the ORF on the tmRNA; the nascent peptide is terminated with the 'tag peptide' encoded by the tmRNA and targeted for degradation. The ribosome is freed to recommence translation, which seems to be the essential function of trans-translation. In Thermosipho melanesiensis (strain DSM 12029 / CIP 104789 / BI429), this protein is SsrA-binding protein.